A 152-amino-acid polypeptide reads, in one-letter code: Deoxyuridine 5'-triphosphate nucleotidohydrolase (152 aa).

Substrate contacts are provided by residues 71–73, N84, 88–90, and M98; these read RSG and LID.

The protein belongs to the dUTPase family. It depends on Mg(2+) as a cofactor.

It catalyses the reaction dUTP + H2O = dUMP + diphosphate + H(+). The protein operates within pyrimidine metabolism; dUMP biosynthesis; dUMP from dCTP (dUTP route): step 2/2. Functionally, this enzyme is involved in nucleotide metabolism: it produces dUMP, the immediate precursor of thymidine nucleotides and it decreases the intracellular concentration of dUTP so that uracil cannot be incorporated into DNA. This is Deoxyuridine 5'-triphosphate nucleotidohydrolase from Enterobacter sp. (strain 638).